The primary structure comprises 165 residues: NADH-quinone oxidoreductase subunit I (165 aa).

4Fe-4S ferredoxin-type domains are found at residues 57-86 (RRYE…IESE) and 96-125 (TRYD…ETHI). [4Fe-4S] cluster contacts are provided by Cys-66, Cys-69, Cys-72, Cys-76, Cys-105, Cys-108, Cys-111, and Cys-115.

This sequence belongs to the complex I 23 kDa subunit family. As to quaternary structure, NDH-1 is composed of 14 different subunits. Subunits NuoA, H, J, K, L, M, N constitute the membrane sector of the complex. The cofactor is [4Fe-4S] cluster.

Its subcellular location is the cell inner membrane. It carries out the reaction a quinone + NADH + 5 H(+)(in) = a quinol + NAD(+) + 4 H(+)(out). NDH-1 shuttles electrons from NADH, via FMN and iron-sulfur (Fe-S) centers, to quinones in the respiratory chain. The immediate electron acceptor for the enzyme in this species is believed to be ubiquinone. Couples the redox reaction to proton translocation (for every two electrons transferred, four hydrogen ions are translocated across the cytoplasmic membrane), and thus conserves the redox energy in a proton gradient. The polypeptide is NADH-quinone oxidoreductase subunit I (Methylibium petroleiphilum (strain ATCC BAA-1232 / LMG 22953 / PM1)).